The following is a 155-amino-acid chain: MSQVILDLQLACEDNSGLPEESQFQTWLNAVIPQFQEESEVTIRVVDTAESHSLNLTYRGKDKPTNVLSFPFEVPPGMEMSLLGDLVICRQMVEKEAQEQGKPLEAHWAHMVVHGSLHLLGYDHIEDDEAEEMEALETEIMLALGYEDPYIAEKE.

Zn(2+) contacts are provided by His114, His118, and His124.

Belongs to the endoribonuclease YbeY family. The cofactor is Zn(2+).

It localises to the cytoplasm. Functionally, single strand-specific metallo-endoribonuclease involved in late-stage 70S ribosome quality control and in maturation of the 3' terminus of the 16S rRNA. The protein is Endoribonuclease YbeY of Escherichia coli O157:H7.